Reading from the N-terminus, the 367-residue chain is Mating-type protein ALPHA2 (367 aa).

Positions 273–338 (GADAIDSEKL…NKRRTGAKKR (66 aa)) form a DNA-binding region, homeobox; TALE-type.

This sequence belongs to the TALE/M-ATYP homeobox family. In terms of assembly, forms a heterodimer with A1.

Its subcellular location is the nucleus. Mating type proteins are sequence specific DNA-binding proteins that act as master switches in yeast differentiation by controlling gene expression in a cell type-specific fashion. Transcriptional corepressor that acts in conjunction with A1 to repress transcription of haploid-specific genes. This Yarrowia lipolytica (strain CLIB 122 / E 150) (Yeast) protein is Mating-type protein ALPHA2 (MATB2).